Consider the following 420-residue polypeptide: Probable pectate lyase C (420 aa).

A signal peptide spans Met-1–Ala-20. N-linked (GlcNAc...) asparagine glycosylation is found at Asn-49, Asn-165, and Asn-202. Residue Arg-205 is part of the active site. In terms of domain architecture, EF-hand spans Asn-262–Val-297. The Ca(2+) site is built by Asp-275, Asp-277, Asp-279, Gln-281, and Glu-286. Residues Thr-358 to Ser-396 form a disordered region. N-linked (GlcNAc...) asparagine glycosylation is present at Asn-394.

Belongs to the polysaccharide lyase 1 family. Ca(2+) serves as cofactor.

It is found in the secreted. It catalyses the reaction Eliminative cleavage of (1-&gt;4)-alpha-D-galacturonan to give oligosaccharides with 4-deoxy-alpha-D-galact-4-enuronosyl groups at their non-reducing ends.. Pectinolytic enzyme consist of four classes of enzymes: pectin lyase, polygalacturonase, pectin methylesterase and rhamnogalacturonase. Among pectinolytic enzymes, pectin lyase is the most important in depolymerization of pectin, since it cleaves internal glycosidic bonds of highly methylated pectins. Favors pectate, the anion, over pectin, the methyl ester. The protein is Probable pectate lyase C (plyC) of Aspergillus fumigatus (strain CBS 144.89 / FGSC A1163 / CEA10) (Neosartorya fumigata).